Reading from the N-terminus, the 342-residue chain is Probable dual-specificity RNA methyltransferase RlmN (342 aa).

Catalysis depends on Glu91, which acts as the Proton acceptor. The region spanning 97 to 327 (YKHGNSICVS…TTIRREMGAD (231 aa)) is the Radical SAM core domain. The cysteines at positions 104 and 332 are disulfide-linked. Residues Cys111, Cys115, and Cys118 each contribute to the [4Fe-4S] cluster site. Residues 158 to 159 (GE), Ser190, 213 to 215 (SLH), and Asn289 contribute to the S-adenosyl-L-methionine site. The active-site S-methylcysteine intermediate is Cys332.

It belongs to the radical SAM superfamily. RlmN family. [4Fe-4S] cluster is required as a cofactor.

Its subcellular location is the cytoplasm. The catalysed reaction is adenosine(2503) in 23S rRNA + 2 reduced [2Fe-2S]-[ferredoxin] + 2 S-adenosyl-L-methionine = 2-methyladenosine(2503) in 23S rRNA + 5'-deoxyadenosine + L-methionine + 2 oxidized [2Fe-2S]-[ferredoxin] + S-adenosyl-L-homocysteine. It catalyses the reaction adenosine(37) in tRNA + 2 reduced [2Fe-2S]-[ferredoxin] + 2 S-adenosyl-L-methionine = 2-methyladenosine(37) in tRNA + 5'-deoxyadenosine + L-methionine + 2 oxidized [2Fe-2S]-[ferredoxin] + S-adenosyl-L-homocysteine. Functionally, specifically methylates position 2 of adenine 2503 in 23S rRNA and position 2 of adenine 37 in tRNAs. In Clostridium botulinum (strain ATCC 19397 / Type A), this protein is Probable dual-specificity RNA methyltransferase RlmN.